A 282-amino-acid chain; its full sequence is Large ribosomal subunit protein uL2 (282 aa).

The tract at residues 215 to 282 (RHKGIRPTVR…IIRSRKETKK (68 aa)) is disordered. The segment covering 263–282 (RNPKKPSTKLIIRSRKETKK) has biased composition (basic residues).

The protein belongs to the universal ribosomal protein uL2 family. Part of the 50S ribosomal subunit. Forms a bridge to the 30S subunit in the 70S ribosome.

In terms of biological role, one of the primary rRNA binding proteins. Required for association of the 30S and 50S subunits to form the 70S ribosome, for tRNA binding and peptide bond formation. It has been suggested to have peptidyltransferase activity; this is somewhat controversial. Makes several contacts with the 16S rRNA in the 70S ribosome. This is Large ribosomal subunit protein uL2 from Mesomycoplasma hyopneumoniae (strain J / ATCC 25934 / NCTC 10110) (Mycoplasma hyopneumoniae).